A 93-amino-acid chain; its full sequence is uncharacterized protein (93 aa).

It to M.tuberculosis Rv1738.

This is an uncharacterized protein from Mycobacterium tuberculosis (strain CDC 1551 / Oshkosh).